Consider the following 324-residue polypeptide: Lipoyl synthase (324 aa).

7 residues coordinate [4Fe-4S] cluster: Cys72, Cys77, Cys83, Cys98, Cys102, Cys105, and Ser313. Positions 84-302 (FRFGTASFMI…AQEGKKMGFL (219 aa)) constitute a Radical SAM core domain.

Belongs to the radical SAM superfamily. Lipoyl synthase family. Requires [4Fe-4S] cluster as cofactor.

It localises to the cytoplasm. The catalysed reaction is [[Fe-S] cluster scaffold protein carrying a second [4Fe-4S](2+) cluster] + N(6)-octanoyl-L-lysyl-[protein] + 2 oxidized [2Fe-2S]-[ferredoxin] + 2 S-adenosyl-L-methionine + 4 H(+) = [[Fe-S] cluster scaffold protein] + N(6)-[(R)-dihydrolipoyl]-L-lysyl-[protein] + 4 Fe(3+) + 2 hydrogen sulfide + 2 5'-deoxyadenosine + 2 L-methionine + 2 reduced [2Fe-2S]-[ferredoxin]. The protein operates within protein modification; protein lipoylation via endogenous pathway; protein N(6)-(lipoyl)lysine from octanoyl-[acyl-carrier-protein]: step 2/2. Catalyzes the radical-mediated insertion of two sulfur atoms into the C-6 and C-8 positions of the octanoyl moiety bound to the lipoyl domains of lipoate-dependent enzymes, thereby converting the octanoylated domains into lipoylated derivatives. This is Lipoyl synthase from Dichelobacter nodosus (strain VCS1703A).